Reading from the N-terminus, the 149-residue chain is uncharacterized protein (149 aa).

The stretch at 111–140 (HKALEKATELIENEEELLKREGIKRENLKF) forms a coiled coil.

This is an uncharacterized protein from Aquifex aeolicus (strain VF5).